The following is a 206-amino-acid chain: Thymidylate kinase (206 aa).

16-23 (GIDGTGKS) lines the ATP pocket.

It belongs to the thymidylate kinase family.

The catalysed reaction is dTMP + ATP = dTDP + ADP. Phosphorylation of dTMP to form dTDP in both de novo and salvage pathways of dTTP synthesis. This is Thymidylate kinase from Akkermansia muciniphila (strain ATCC BAA-835 / DSM 22959 / JCM 33894 / BCRC 81048 / CCUG 64013 / CIP 107961 / Muc).